Here is a 1154-residue protein sequence, read N- to C-terminus: Paired amphipathic helix protein pst3 (1154 aa).

2 disordered regions span residues 1–71 and 91–110; these read MDVM…RSVT and SGKD…SSSN. Basic and acidic residues predominate over residues 9–27; the sequence is DSERDNPGDKVETQSDKNH. Composition is skewed to polar residues over residues 32–45 and 100–110; these read SPSQ…TSLH and QNAEGLSSSSN. The PAH 1 domain maps to 111–181; sequence RPLDVNDALS…EGFNTFLPSG (71 aa). 2 disordered regions span residues 199–249 and 321–376; these read GTPM…STEN and DNVD…KTSR. A compositionally biased stretch (low complexity) spans 228 to 241; the sequence is STSPTDSQPQPSAP. Residues 252–322 form the PAH 2 domain; that stretch reads PRVDFNYAIA…EEFKLFLPDN (71 aa). Composition is skewed to polar residues over residues 323–337 and 365–376; these read VDST…QKSP and AQISRSISKTSR. One can recognise a PAH 3 domain in the interval 403–472; sequence SPYAATQEEL…LWFSEFIRWS (70 aa). A disordered region spans residues 797-824; that stretch reads NSNNTNVSFQTDETQTEDETMSDIHPDD.

It is found in the nucleus. This chain is Paired amphipathic helix protein pst3 (pst3), found in Schizosaccharomyces pombe (strain 972 / ATCC 24843) (Fission yeast).